The following is a 315-amino-acid chain: Taste receptor type 2 member 129 (315 aa).

At 1–9 the chain is on the extracellular side; that stretch reads MDGIIQIIS. The helical transmembrane segment at 10-30 threads the bilayer; sequence AFIVIIEIIIGWFGNGFIVLV. Topologically, residues 31–46 are cytoplasmic; that stretch reads NCMHWIKRRRISTVNQ. The chain crosses the membrane as a helical span at residues 47-67; that stretch reads ILTALAFSRIYLLLTVFTVIL. The Extracellular segment spans residues 68–101; sequence ASVQYSNILVTRREVKVIIFHLITSNHFSMWLAA. A helical transmembrane segment spans residues 102–122; sequence CLGLFYFLKIANFSNFIFVFL. Residues 123 to 128 are Cytoplasmic-facing; that stretch reads KKRVNK. A helical transmembrane segment spans residues 129–149; sequence VVSGTLLMSLVFLFLNTLLIN. Residues 150-185 lie on the Extracellular side of the membrane; sequence SYIDAQIDDYRGYLLYDFTSNITVSFYRVILVINNC. The N-linked (GlcNAc...) asparagine glycan is linked to Asn170. A helical membrane pass occupies residues 186 to 206; it reads IFTSIPFALSQSTFLMLIFSL. Topologically, residues 207–233 are cytoplasmic; that stretch reads WRHYKKMQQHAQRCRDTLTNAHIKVLQ. A helical membrane pass occupies residues 234 to 254; the sequence is TMIMYVLLSAIFFLFLSMQIW. The Extracellular segment spans residues 255 to 266; the sequence is RNKLMENILFIR. The chain crosses the membrane as a helical span at residues 267 to 287; it reads FCETVAAVFPSGHSCVLIWGD. At 288-315 the chain is on the cytoplasmic side; sequence TNLRQTFLSVLWWLKHRFTLWVPKLYCR.

It belongs to the G-protein coupled receptor T2R family.

It localises to the membrane. In terms of biological role, putative taste receptor which may play a role in the perception of bitterness. The protein is Taste receptor type 2 member 129 of Rattus norvegicus (Rat).